Here is a 542-residue protein sequence, read N- to C-terminus: MSKEIKFSSDARTAMMRGIDILADTVKTTLGPKGRNVVLEKSYGSPLITNDGVTIAKEIELEDHFENMGAKLVSEVASKTNDIAGDGTTTATVLTQAIVREGLKNVTAGANPVGIRRGIELAAETAVASIKEMAIPVHDKSAIAQVATVSSRSEKVGEYISDAMERVGSDGVITIEESKGMQTELDVVEGMQFDRGYLSQYMVSNTEKMVAELDNPYILITDKKISNIQEILPLLEQILKTNRPLLIVADDVDGEALPTLVLNKIKGVFNVVAVKAPGFGDRRKAQLEDLAILTGGTVITEELGLDLKDATLEALGQAAKATVDKDHTTIVEGAGSVDAISDRVAIIKAQIEKTTSDFDREKLQERLAKLAGGVAVVKVGAATETELKAMKLLIEDALNATRAAVEEGIVSGGGTALVNAIAALDKLSEEGDIQTGINIVRRALEEPVRQIAANAGYEGSVIIDKLRSEKVGTGFNAATGQWVNMIEEGIVDPAKVTRSALQNAASVAGLILTTEAVVANKPEPAAPAMPPMDPSMGMGGMM.

ATP is bound by residues 29–32 (TLGP), 86–90 (DGTTT), Gly-413, 476–478 (NAA), and Asp-492.

The protein belongs to the chaperonin (HSP60) family. In terms of assembly, forms a cylinder of 14 subunits composed of two heptameric rings stacked back-to-back. Interacts with the co-chaperonin GroES.

It is found in the cytoplasm. It catalyses the reaction ATP + H2O + a folded polypeptide = ADP + phosphate + an unfolded polypeptide.. Together with its co-chaperonin GroES, plays an essential role in assisting protein folding. The GroEL-GroES system forms a nano-cage that allows encapsulation of the non-native substrate proteins and provides a physical environment optimized to promote and accelerate protein folding. The polypeptide is Chaperonin GroEL (Lactococcus lactis subsp. cremoris (strain SK11)).